Consider the following 114-residue polypeptide: MSASESAPSAPPVKGMRKNGKNWHDSKKPFRPTAGMTSYAKRLEARKHQEAVKEHERELKEEKEAERQAHIQRIKDRRAAKEEKERYDKMAEKMHRKRVERLKRREKRNKLLNS.

A disordered region spans residues 1–96; the sequence is MSASESAPSA…YDKMAEKMHR (96 aa). Positions 40-101 form a coiled coil; the sequence is AKRLEARKHQ…EKMHRKRVER (62 aa). A compositionally biased stretch (basic and acidic residues) spans 41 to 93; the sequence is KRLEARKHQEAVKEHERELKEEKEAERQAHIQRIKDRRAAKEEKERYDKMAEK.

This sequence belongs to the CGR1 family.

Its subcellular location is the nucleus. The protein localises to the nucleolus. Functionally, involved in nucleolar integrity and required for processing of the pre-rRNA for the 60S ribosome subunit. The protein is rRNA-processing protein cgrA (cgrA) of Aspergillus terreus (strain NIH 2624 / FGSC A1156).